Reading from the N-terminus, the 361-residue chain is S-adenosylmethionine:tRNA ribosyltransferase-isomerase (361 aa).

It belongs to the QueA family. In terms of assembly, monomer.

The protein resides in the cytoplasm. The enzyme catalyses 7-aminomethyl-7-carbaguanosine(34) in tRNA + S-adenosyl-L-methionine = epoxyqueuosine(34) in tRNA + adenine + L-methionine + 2 H(+). It participates in tRNA modification; tRNA-queuosine biosynthesis. Transfers and isomerizes the ribose moiety from AdoMet to the 7-aminomethyl group of 7-deazaguanine (preQ1-tRNA) to give epoxyqueuosine (oQ-tRNA). The sequence is that of S-adenosylmethionine:tRNA ribosyltransferase-isomerase from Methylocella silvestris (strain DSM 15510 / CIP 108128 / LMG 27833 / NCIMB 13906 / BL2).